A 232-amino-acid polypeptide reads, in one-letter code: Ion-translocating oxidoreductase complex subunit E (232 aa).

Transmembrane regions (helical) follow at residues 18-38 (GLVQ…LTNA), 39-59 (LGLG…VSLV), 69-89 (IPVF…VINA), 93-113 (GLYL…VIIG), 128-148 (AFDG…LGAV), and 182-202 (SFLL…LIAG).

Belongs to the NqrDE/RnfAE family. In terms of assembly, the complex is composed of six subunits: RnfA, RnfB, RnfC, RnfD, RnfE and RnfG.

The protein resides in the cell inner membrane. In terms of biological role, part of a membrane-bound complex that couples electron transfer with translocation of ions across the membrane. This chain is Ion-translocating oxidoreductase complex subunit E, found in Shewanella amazonensis (strain ATCC BAA-1098 / SB2B).